We begin with the raw amino-acid sequence, 744 residues long: Catalase-peroxidase (744 aa).

The disordered stretch occupies residues 1 to 21; the sequence is MANESKCPFHQTAGGGTSNRD. Residues 91 to 241 constitute a cross-link (tryptophyl-tyrosyl-methioninium (Trp-Tyr) (with M-267)); the sequence is WHSAGTYRIG…LAAVQMGLIY (151 aa). Residue histidine 92 is the Proton acceptor of the active site. A cross-link (tryptophyl-tyrosyl-methioninium (Tyr-Met) (with W-91)) is located at residues 241–267; sequence YVNPEGPEGNPDPVASGKDIRDTFGRM. Histidine 282 is a heme b binding site. Positions 361 to 387 are disordered; that stretch reads GAHQWRPKDGKGANTVPDAHDTTKRHA.

This sequence belongs to the peroxidase family. Peroxidase/catalase subfamily. Homodimer or homotetramer. Requires heme b as cofactor. Formation of the three residue Trp-Tyr-Met cross-link is important for the catalase, but not the peroxidase activity of the enzyme.

It carries out the reaction H2O2 + AH2 = A + 2 H2O. The catalysed reaction is 2 H2O2 = O2 + 2 H2O. Functionally, bifunctional enzyme with both catalase and broad-spectrum peroxidase activity. The protein is Catalase-peroxidase of Pseudomonas entomophila (strain L48).